The chain runs to 191 residues: Thymidine kinase (191 aa).

ATP-binding positions include 15–22 (GSMFSGKS) and 88–91 (DEVQ). E89 acts as the Proton acceptor in catalysis. The Zn(2+) site is built by C145, C148, C183, and H186.

It belongs to the thymidine kinase family. As to quaternary structure, homotetramer.

Its subcellular location is the cytoplasm. The enzyme catalyses thymidine + ATP = dTMP + ADP + H(+). This is Thymidine kinase from Macrococcus caseolyticus (strain JCSC5402) (Macrococcoides caseolyticum).